The primary structure comprises 113 residues: U11-theraphotoxin-Hhn1a (113 aa).

The first 21 residues, 1–21, serve as a signal peptide directing secretion; sequence MNTVRVTFLPVFVLAVSLGQA. Residues 22–74 constitute a propeptide that is removed on maturation; the sequence is DKDENRMEMQEKTEQGKSYLDFAENLLLQKLEELEAKLLEEDSEESRNSRQKR. Residues 61-83 form a disordered region; sequence EEDSEESRNSRQKRCIGEGVPCD. Intrachain disulfides connect cysteine 75–cysteine 90, cysteine 82–cysteine 95, and cysteine 89–cysteine 110.

This sequence belongs to the neurotoxin 14 (magi-1) family. 01 (HNTX-16) subfamily. In terms of tissue distribution, expressed by the venom gland.

It is found in the secreted. The protein is U11-theraphotoxin-Hhn1a of Cyriopagopus hainanus (Chinese bird spider).